Reading from the N-terminus, the 387-residue chain is ATP phosphoribosyltransferase regulatory subunit (387 aa).

Belongs to the class-II aminoacyl-tRNA synthetase family. HisZ subfamily. In terms of assembly, heteromultimer composed of HisG and HisZ subunits.

The protein resides in the cytoplasm. It functions in the pathway amino-acid biosynthesis; L-histidine biosynthesis; L-histidine from 5-phospho-alpha-D-ribose 1-diphosphate: step 1/9. Required for the first step of histidine biosynthesis. May allow the feedback regulation of ATP phosphoribosyltransferase activity by histidine. This Methylobacillus flagellatus (strain ATCC 51484 / DSM 6875 / VKM B-1610 / KT) protein is ATP phosphoribosyltransferase regulatory subunit.